The chain runs to 111 residues: UPF0060 membrane protein XAC3064 (111 aa).

The next 4 helical transmembrane spans lie at 8-28, 32-52, 64-84, and 91-111; these read LLLF…PYLW, GGSV…VWLL, AAYG…VDGV, and LLGA…PRSA.

It belongs to the UPF0060 family.

It is found in the cell inner membrane. The protein is UPF0060 membrane protein XAC3064 of Xanthomonas axonopodis pv. citri (strain 306).